We begin with the raw amino-acid sequence, 229 residues long: Ribonuclease 3 (229 aa).

One can recognise an RNase III domain in the interval 5–134 (EQKLEQDFGI…FLGALYLDQG (130 aa)). A Mg(2+)-binding site is contributed by glutamate 47. Aspartate 51 is an active-site residue. The Mg(2+) site is built by aspartate 120 and glutamate 123. Glutamate 123 is a catalytic residue. The region spanning 160 to 229 (DYKTALQERL…AKSALEQLGN (70 aa)) is the DRBM domain.

It belongs to the ribonuclease III family. In terms of assembly, homodimer. Requires Mg(2+) as cofactor.

It localises to the cytoplasm. It catalyses the reaction Endonucleolytic cleavage to 5'-phosphomonoester.. Digests double-stranded RNA. Involved in the processing of primary rRNA transcript to yield the immediate precursors to the large and small rRNAs (23S and 16S). Also processes some mRNAs, and tRNAs when they are encoded in the rRNA operon. In terms of biological role, CRISPR (clustered regularly interspaced short palindromic repeat) is an adaptive immune system that provides protection against mobile genetic elements (viruses, transposable elements and conjugative plasmids). CRISPR clusters contain spacers, sequences complementary to antecedent mobile elements, and target invading nucleic acids. CRISPR clusters are transcribed and processed into CRISPR RNA (crRNA). In this organism endogenous ribonuclease 3 and Cas9 are required for correct coprocessing of pre-crRNA and the trans-encoded small RNA (tracrRNA). Cas9, crRNA and tracrRNA are required for cleavage of invading DNA. Complements pre-crRNA and tracRNA coprocessing defects in an rnc deletion in S.pyogenes strain 370. This is Ribonuclease 3 from Streptococcus thermophilus (strain ATCC BAA-491 / LMD-9).